The chain runs to 52 residues: Phospholamban (52 aa).

M1 carries the post-translational modification N-acetylmethionine. Residues 1-31 lie on the Cytoplasmic side of the membrane; it reads MEKVQYLTRSAIRRASTIEMPQQARQKLQNL. S16 bears the Phosphoserine; by PKA and DMPK mark. The interval 16-22 is involved in HAX1 binding; the sequence is STIEMPQ. T17 carries the phosphothreonine; by CaMK2 modification. Residues 32-52 form a helical membrane-spanning segment; it reads FINFCLILICLLLICIIVMLL. C36 carries S-palmitoyl cysteine lipidation.

It belongs to the phospholamban family. Homopentamer. Can also form heterooligomers with other sarcoplasmic/endoplasmic reticulum calcium ATPase (SERCA) regulators ARLN, ERLN, SLN and STRIT1/DWORF. Monomer. Interacts with HAX1. Interacts as a monomer with ATP2A2; the interaction decreases ATP2A2 Ca(2+) affinity. Interacts with VMP1; VMP1 competes with PLN and SLN to prevent them from forming an inhibitory complex with ATP2A2. Interacts with S100A1 in a Ca(2+)-dependent manner. Post-translationally, phosphorylation by PKA abolishes the inhibition of ATP2A2-mediated calcium uptake. Phosphorylated at Thr-17 by CaMK2, and in response to beta-adrenergic stimulation. Phosphorylation by DMPK may stimulate sarcoplasmic reticulum calcium uptake in cardiomyocytes. Palmitoylated by ZDHHC16, promoting formation of the homopentamer. In terms of processing, in elongated spermatids, proteolytically cleaved by SPPL2C which modulates intracellular Ca(2+) homeostasis. Heart muscle (at protein level).

It is found in the endoplasmic reticulum membrane. The protein resides in the sarcoplasmic reticulum membrane. The protein localises to the mitochondrion membrane. It localises to the membrane. In terms of biological role, reversibly inhibits the activity of ATP2A2/SERCA2 in cardiac sarcoplasmic reticulum by decreasing the apparent affinity of the ATPase for Ca(2+). Binds preferentially to the ATP-bound E1 conformational form of ATP2A2 which predominates at low Ca(2+) concentrations during the diastolic phase of the cardiac cycle. Inhibits ATP2A2 Ca(2+) affinity by disrupting its allosteric activation by ATP. Modulates the contractility of the heart muscle in response to physiological stimuli via its effects on ATP2A2. Modulates calcium re-uptake during muscle relaxation and plays an important role in calcium homeostasis in the heart muscle. The degree of ATP2A2 inhibition depends on the oligomeric state of PLN. ATP2A2 inhibition is alleviated by PLN phosphorylation. Also inhibits the activity of ATP2A3/SERCA3. Controls intracellular Ca(2+) levels in elongated spermatids and may play a role in germ cell differentiation. In the thalamic reticular nucleus of the brain, plays a role in the regulation of sleep patterns and executive functioning. The chain is Phospholamban from Homo sapiens (Human).